The following is a 149-amino-acid chain: Large ribosomal subunit protein uL15 (149 aa).

Residues 1 to 54 (MSLKLHNLKPTPNSRPEKHRKGRGHAAGKGKQAGKGQSGQNKRKGHRLGFEGGQ) form a disordered region. Basic residues predominate over residues 17-28 (EKHRKGRGHAAG).

This sequence belongs to the universal ribosomal protein uL15 family. As to quaternary structure, part of the 50S ribosomal subunit.

In terms of biological role, binds to the 23S rRNA. This chain is Large ribosomal subunit protein uL15, found in Mycoplasmopsis synoviae (strain 53) (Mycoplasma synoviae).